Reading from the N-terminus, the 176-residue chain is Peptide methionine sulfoxide reductase MsrA (176 aa).

Cys-12 is a catalytic residue.

It belongs to the MsrA Met sulfoxide reductase family.

It carries out the reaction L-methionyl-[protein] + [thioredoxin]-disulfide + H2O = L-methionyl-(S)-S-oxide-[protein] + [thioredoxin]-dithiol. The catalysed reaction is [thioredoxin]-disulfide + L-methionine + H2O = L-methionine (S)-S-oxide + [thioredoxin]-dithiol. Its function is as follows. Has an important function as a repair enzyme for proteins that have been inactivated by oxidation. Catalyzes the reversible oxidation-reduction of methionine sulfoxide in proteins to methionine. The chain is Peptide methionine sulfoxide reductase MsrA from Thermus thermophilus (strain ATCC 27634 / DSM 579 / HB8).